We begin with the raw amino-acid sequence, 60 residues long: MDTKLLELLVCPVTKGPLTWNPEKQELCSRSARLAYPVRDGIPVLLENEARTLSDEELGL.

The protein belongs to the UPF0434 family.

The chain is UPF0434 protein Vapar_2640 from Variovorax paradoxus (strain S110).